A 226-amino-acid polypeptide reads, in one-letter code: Enolase-phosphatase E1 (226 aa).

The protein belongs to the HAD-like hydrolase superfamily. MasA/MtnC family. In terms of assembly, monomer. Mg(2+) serves as cofactor.

It catalyses the reaction 5-methylsulfanyl-2,3-dioxopentyl phosphate + H2O = 1,2-dihydroxy-5-(methylsulfanyl)pent-1-en-3-one + phosphate. It participates in amino-acid biosynthesis; L-methionine biosynthesis via salvage pathway; L-methionine from S-methyl-5-thio-alpha-D-ribose 1-phosphate: step 3/6. The protein operates within amino-acid biosynthesis; L-methionine biosynthesis via salvage pathway; L-methionine from S-methyl-5-thio-alpha-D-ribose 1-phosphate: step 4/6. Bifunctional enzyme that catalyzes the enolization of 2,3-diketo-5-methylthiopentyl-1-phosphate (DK-MTP-1-P) into the intermediate 2-hydroxy-3-keto-5-methylthiopentenyl-1-phosphate (HK-MTPenyl-1-P), which is then dephosphorylated to form the acireductone 1,2-dihydroxy-3-keto-5-methylthiopentene (DHK-MTPene). This Alcanivorax borkumensis (strain ATCC 700651 / DSM 11573 / NCIMB 13689 / SK2) protein is Enolase-phosphatase E1.